The sequence spans 352 residues: Ion-translocating oxidoreductase complex subunit D (352 aa).

A run of 4 helical transmembrane segments spans residues 20 to 40, 42 to 62, 89 to 109, and 123 to 143; these read IMLL…WFFG, GTLV…ALVL, IPPL…VIIA, and PAMI…TSWL. Thr187 bears the FMN phosphoryl threonine mark. The next 5 helical transmembrane spans lie at 214 to 234, 242 to 262, 267 to 287, 301 to 321, and 322 to 342; these read ILAG…GLWL, WHIP…GWLF, LAAP…FFIL, LIFG…GGYP, and DGVA…DYYT.

This sequence belongs to the NqrB/RnfD family. As to quaternary structure, the complex is composed of six subunits: RsxA, RsxB, RsxC, RsxD, RsxE and RsxG. The cofactor is FMN.

The protein localises to the cell inner membrane. Functionally, part of a membrane-bound complex that couples electron transfer with translocation of ions across the membrane. Required to maintain the reduced state of SoxR. This chain is Ion-translocating oxidoreductase complex subunit D, found in Shigella boydii serotype 18 (strain CDC 3083-94 / BS512).